The following is a 177-amino-acid chain: MEVCRCHHGYLISLLLFLFHSETACYPLGKRPCEMQAFRIWDVNQKTFYLRNNQLVAGYLQGPNTKLEEKIDVVPIEPHAMFLGIHGGKLCLACVKSGDEIKLGLEPVNITDLNSSKEEDKRFAFIRSDSGPTTSFESAACPGWFLCTALETDQPVGLTNTPQDAVQVTKFYFQQDQ.

The N-terminal stretch at 1–25 (MEVCRCHHGYLISLLLFLFHSETAC) is a signal peptide. An intrachain disulfide couples cysteine 91 to cysteine 141. 2 N-linked (GlcNAc...) asparagine glycosylation sites follow: asparagine 109 and asparagine 114.

The protein belongs to the IL-1 family.

The protein resides in the secreted. Its function is as follows. Anti-inflammatory antagonist of interleukin-1 family of proinflammatory cytokines such as interleukin-1beta/IL1B and interleukin-1alpha/IL1A. Protects from immune dysregulation and uncontrolled systemic inflammation triggered by IL1 for a range of innate stimulatory agents such as pathogens. The sequence is that of Interleukin-1 receptor antagonist protein (IL1RN) from Tursiops truncatus (Atlantic bottle-nosed dolphin).